Consider the following 149-residue polypeptide: Nucleoside diphosphate kinase (149 aa).

ATP contacts are provided by K9, F57, R85, T91, R102, and N112. H115 acts as the Pros-phosphohistidine intermediate in catalysis.

It belongs to the NDK family. As to quaternary structure, homotetramer. Mg(2+) is required as a cofactor.

It localises to the cytoplasm. It catalyses the reaction a 2'-deoxyribonucleoside 5'-diphosphate + ATP = a 2'-deoxyribonucleoside 5'-triphosphate + ADP. The catalysed reaction is a ribonucleoside 5'-diphosphate + ATP = a ribonucleoside 5'-triphosphate + ADP. Functionally, major role in the synthesis of nucleoside triphosphates other than ATP. The ATP gamma phosphate is transferred to the NDP beta phosphate via a ping-pong mechanism, using a phosphorylated active-site intermediate. The polypeptide is Nucleoside diphosphate kinase (Staphylococcus aureus (strain Mu3 / ATCC 700698)).